A 39-amino-acid chain; its full sequence is Photosystem II reaction center protein Y (39 aa).

Residues 5-23 (VLVVVGPLLIAASWAVFNI) traverse the membrane as a helical segment.

The protein belongs to the PsbY family. PSII is composed of 1 copy each of membrane proteins PsbA, PsbB, PsbC, PsbD, PsbE, PsbF, PsbH, PsbI, PsbJ, PsbK, PsbL, PsbM, PsbT, PsbX, PsbY, PsbZ, Psb30/Ycf12, peripheral proteins PsbO, CyanoQ (PsbQ), PsbU, PsbV and a large number of cofactors. It forms dimeric complexes.

Its subcellular location is the cellular thylakoid membrane. Loosely associated component of the core of photosystem II (PSII), it is not always seen in crystals. PSII is a light-driven water plastoquinone oxidoreductase, using light energy to abstract electrons from H(2)O, generating a proton gradient subsequently used for ATP formation. The polypeptide is Photosystem II reaction center protein Y (Rippkaea orientalis (strain PCC 8801 / RF-1) (Cyanothece sp. (strain PCC 8801))).